The sequence spans 132 residues: uncharacterized protein (132 aa).

The segment at 1–34 is disordered; the sequence is MTAGAGGSPPTRRCPATEDRAPATVATPSSADPT.

It to M.tuberculosis Rv2656c.

This is an uncharacterized protein from Mycobacterium tuberculosis (strain CDC 1551 / Oshkosh).